A 297-amino-acid polypeptide reads, in one-letter code: Acetyl-coenzyme A carboxylase carboxyl transferase subunit beta (297 aa).

The tract at residues 1–23 is disordered; that stretch reads MSWIERILGRTSSSSSSSKSKVP. In terms of domain architecture, CoA carboxyltransferase N-terminal spans 26 to 295; it reads VWTKCTSCEQ…PFKTAELIVE (270 aa). Zn(2+) is bound by residues Cys-30, Cys-33, Cys-49, and Cys-52. The C4-type zinc-finger motif lies at 30 to 52; the sequence is CTSCEQVLYSEELKRNMHVCPKC.

It belongs to the AccD/PCCB family. In terms of assembly, acetyl-CoA carboxylase is a heterohexamer composed of biotin carboxyl carrier protein (AccB), biotin carboxylase (AccC) and two subunits each of ACCase subunit alpha (AccA) and ACCase subunit beta (AccD). Zn(2+) serves as cofactor.

The protein resides in the cytoplasm. The enzyme catalyses N(6)-carboxybiotinyl-L-lysyl-[protein] + acetyl-CoA = N(6)-biotinyl-L-lysyl-[protein] + malonyl-CoA. It functions in the pathway lipid metabolism; malonyl-CoA biosynthesis; malonyl-CoA from acetyl-CoA: step 1/1. Component of the acetyl coenzyme A carboxylase (ACC) complex. Biotin carboxylase (BC) catalyzes the carboxylation of biotin on its carrier protein (BCCP) and then the CO(2) group is transferred by the transcarboxylase to acetyl-CoA to form malonyl-CoA. This chain is Acetyl-coenzyme A carboxylase carboxyl transferase subunit beta, found in Actinobacillus pleuropneumoniae serotype 3 (strain JL03).